Here is a 426-residue protein sequence, read N- to C-terminus: Neuromedin-U receptor 1 (426 aa).

At 1 to 65 the chain is on the extracellular side; sequence MTPLCLNCSV…QTELFMPICA (65 aa). Asn-7, Asn-27, and Asn-41 each carry an N-linked (GlcNAc...) asparagine glycan. Residues 66-86 form a helical membrane-spanning segment; sequence TYLLIFVVGAVGNGLTCLVIL. Topologically, residues 87–97 are cytoplasmic; the sequence is RHKAMRTPTNY. The chain crosses the membrane as a helical span at residues 98–118; that stretch reads YLFSLAVSDLLVLLVGLPLEL. Topologically, residues 119–138 are extracellular; it reads YEMWHNYPFLLGVGGCYFRT. A disulfide bridge links Cys-134 with Cys-219. Residues 139–161 traverse the membrane as a helical segment; it reads LLFEMVCLASVLNVTALSVERYV. The Cytoplasmic portion of the chain corresponds to 162–181; sequence AVVHPLQARSMVTRAHVRRV. Residues 182–202 traverse the membrane as a helical segment; that stretch reads LGAVWGLAMLCSLPNTSLHGI. Residues 203-235 are Extracellular-facing; it reads RQLHVPCRGPVPDSAVCMLVRPRALYNMVVQTT. Residues 236-256 traverse the membrane as a helical segment; the sequence is ALLFFCLPMAIMSVLYLLIGL. At 257 to 294 the chain is on the cytoplasmic side; that stretch reads RLRRERLLLMQEAKGRGSAAARSRYTCRLQQHDRGRRQ. A helical membrane pass occupies residues 295-315; that stretch reads VTKMLFVLVVVFGICWAPFHA. Topologically, residues 316–338 are extracellular; the sequence is DRVMWSVVSQWTDGLHLAFQHVH. A helical membrane pass occupies residues 339–359; it reads VISGIFFYLGSAANPVLYSLM. Over 360 to 426 the chain is Cytoplasmic; the sequence is SSRFRETFQE…PEAQQETDPS (67 aa).

Belongs to the G-protein coupled receptor 1 family. Expressed in greatest abundance in peripheral organs, particularly in elements of the gastrointestinal and urogenital systems with highest levels in testes. In central nervous system structures express levels are much lower than those seen in peripheral organs. Within the CNS, has been detected in highest abundance in the cerebellum, dorsal root ganglia, hippocampus, and spinal cord.

It localises to the cell membrane. In terms of biological role, receptor for the neuromedin-U and neuromedin-S neuropeptides. In Homo sapiens (Human), this protein is Neuromedin-U receptor 1 (NMUR1).